The following is a 374-amino-acid chain: 2-oxoglutarate-Fe(II) type oxidoreductase ppzC (374 aa).

The interval 111–130 (KDGPFDSGYRGPGTQRVNPT) is disordered. Residues 220-330 (YPDASLEINF…RVSMPFFWGF (111 aa)) enclose the Fe2OG dioxygenase domain. H254, D256, and H311 together coordinate Fe cation. Residue R321 participates in 2-oxoglutarate binding.

The protein belongs to the iron/ascorbate-dependent oxidoreductase family. Fe(2+) is required as a cofactor.

The enzyme catalyses peramine + 2-oxoglutarate + O2 = 8-hydroxyperamine + succinate + CO2. It participates in secondary metabolite biosynthesis. Functionally, 2-oxoglutarate-Fe(II) type oxidoreductase; part of the gene cluster that mediates the biosynthesis of pyrrolopyrazines, secondary metabolites showing insecticidal activity. Within the pathway, ppzC uses peramine as substrate for hydroxylation to yield the novel analog 8-hydroxyperamine. The single multifunctional NRPS ppzA is sufficient to produce peramine via condensation of 1-pyrroline-5-carboxylate and arginine, N-methylation of the alpha-amino group of arginine and reduction of the thioester and the cyclization to form an iminium ion resulting in release from the peptide synthetase. Deprotonation of this intermediate and oxidation of the pyrroline ring would give rise to peramine. In Epichloe species that produce only peramine, the peramine synthetase gene is not localized in a gene cluster, in contrast to Metarhizium species that contain additional pyrrolopyrazine biosynthesis genes. The 2-oxoglutarate-Fe(II) type oxidoreductase ppzC hydroxylates peramine to yield the newly identified compound 8-hydroxyperamine whereas ppzD converts L-proline into trans-4-hydroxy-L-proline, a precursor of peramine biosynthesis. This chain is 2-oxoglutarate-Fe(II) type oxidoreductase ppzC, found in Metarhizium rileyi (strain RCEF 4871) (Nomuraea rileyi).